The sequence spans 1584 residues: Dicer-like protein 1 (1584 aa).

The disordered stretch occupies residues 31 to 60 (EDVVSDNDDRGNASDVESEDGVKRWTVNPE). A Helicase ATP-binding domain is found at 129–310 (LFERAKQQNT…RAAAELEALL (182 aa)). 142–149 (LDTGSGKT) is a binding site for ATP. Residues 255 to 258 (DEAH) carry the DEAH box motif. The Helicase C-terminal domain maps to 448–621 (KVIMLVRILR…EALPEDRKLT (174 aa)). The 91-residue stretch at 654–744 (SLVCLANFTA…QSVFTKQLPE (91 aa)) folds into the Dicer dsRNA-binding fold domain. The PAZ domain maps to 894-1028 (KALAYVSENE…LILEPMRISP (135 aa)). 2 RNase III domains span residues 1052 to 1207 (VALD…LTGQ) and 1258 to 1424 (AKKF…VDSE). Residues glutamate 1298, aspartate 1410, and glutamate 1413 each coordinate Mg(2+). The region spanning 1458–1545 (TFVANMMAHK…AKKAIKLLEG (88 aa)) is the DRBM domain. Positions 1470, 1516, 1557, and 1559 each coordinate Zn(2+).

The protein belongs to the helicase family. Dicer subfamily. Requires Mg(2+) as cofactor. Mn(2+) serves as cofactor.

Dicer-like endonuclease involved in cleaving double-stranded RNA in the RNA interference (RNAi) pathway. Produces 21 to 25 bp dsRNAs (siRNAs) which target the selective destruction of homologous RNAs leading to sequence-specific suppression of gene expression, called post-transcriptional gene silencing (PTGS). Part of a broad host defense response against viral infection and transposons. Controls the expression of the non-LTR retrotransposon Tad in the African strain, Adiomopoume. In Neurospora crassa (strain ATCC 24698 / 74-OR23-1A / CBS 708.71 / DSM 1257 / FGSC 987), this protein is Dicer-like protein 1 (dcl-1).